Consider the following 421-residue polypeptide: Bestrophin homolog 2 (421 aa).

4 consecutive transmembrane segments (helical) span residues 28 to 48 (IWKAIYMETIIFLICYGIISV), 73 to 93 (LSFIPLEFVLGFFVTIVVDRW), 239 to 259 (LMYPQLVCLAVNLYFLVSIIA), and 275 to 295 (VYFPVMTFLQFIFYMGWLKVI).

This sequence belongs to the anion channel-forming bestrophin (TC 1.A.46) family. Calcium-sensitive chloride channel subfamily. As to quaternary structure, forms oligomers.

It is found in the cell membrane. In terms of biological role, forms chloride channels. The sequence is that of Bestrophin homolog 2 (best-2) from Caenorhabditis elegans.